We begin with the raw amino-acid sequence, 784 residues long: MPHALWTVWVLGAVISLSKEGVPDQPSSLSCDPTGVCDGRSRSLNSIPSGLTAAVKSLDLSNNKIASVGNSDLWKCVNLKALRLGSNDINTIEEDSFSSLRSLEHLDLSNNHLSNLSSSWFRPLSSLKFLNLLGSTYKTLGETSLFSHLTNLRILKVGNIHFTEIQGKDFAGLTFLEELEIDATNLQRYEPKSFKSIQNISHLILRMKQPVLLPEIILDTLSSLEYLELRDTYLNTFHFAEVSDPETNTLIKKFTFRNVKITDESFDEIVKLLNYISGVSEAEFDECTLDGLGEFRTPDIDKIKVIGKLETLTIRRLRIPQFYLFRDLSSIYSLTERVKRITIENSKVFLVPCSLSRHLKSLEYLDLSDNLMVEEYLKNSACERAWPSLQTLILRQNHLTSLGKTGETLLTLKNLTKLDISKNSFHSMPETCQWPEKMKYLNLSSIRIDRLTQCIPQTLEVLDISNNNLNSFSLILPQVKELYISRNKLKTLPDASFLPMLLVMRISRKTINTFSKEQLDSFQKLKTLEAGGNNFICSCEFLSFTQEEQALDQILIDWPENYLCDSPSHVRGQRVQDTHLSVSECHRTALVSAVCCALFLSILLTGVLCHHFHGLWYMKMMWAWLQAKRKPRTAPQRDICYDAFVSYSERDSYWVENLMVQELEHFNPPFKLCLHKRDFIPGKWIIDNIIDSIEKSHKTIFVLSENFVKSEWCKYELDFSHFRLFDENNDAAILILLEPIDKKAIPQRFCKLRKIMNTKTYLEWPTDEAQQEGFWLNLRAAIKS.

Positions 1-20 (MPHALWTVWVLGAVISLSKE) are cleaved as a signal peptide. The Extracellular segment spans residues 21–587 (GVPDQPSSLS…THLSVSECHR (567 aa)). Cysteines 31 and 37 form a disulfide. LRR repeat units lie at residues 54-77 (AVKS…WKCV), 78-101 (NLKA…SSLR), 102-125 (SLEH…RPLS), 126-150 (SLKF…SHLT), 151-175 (NLRI…GLTF), 176-199 (LEEL…SIQN), 200-223 (ISHL…TLSS), 224-250 (LEYL…TNTL), 251-278 (IKKF…YISG), 279-308 (VSEA…VIGK), 309-337 (LETL…LTER), 338-361 (VKRI…HLKS), 362-388 (LEYL…AWPS), 389-414 (LQTL…TLKN), 415-437 (LTKL…WPEK), 438-457 (MKYL…CIPQ), 458-478 (TLEV…ILPQ), 479-500 (VKEL…FLPM), and 501-524 (LLVM…SFQK). Residue Asn115 is glycosylated (N-linked (GlcNAc...) asparagine). N-linked (GlcNAc...) asparagine glycosylation is present at Asn199. Cys353 and Cys382 are oxidised to a cystine. Asn414 carries N-linked (GlcNAc...) asparagine glycosylation. The cysteines at positions 432 and 454 are disulfide-linked. Asn442 carries N-linked (GlcNAc...) asparagine glycosylation. The region spanning 525–579 (LKTLEAGGNNFICSCEFLSFTQEEQALDQILIDWPENYLCDSPSHVRGQRVQDTH) is the LRRCT domain. The chain crosses the membrane as a helical span at residues 588-608 (TALVSAVCCALFLSILLTGVL). Residues 609–784 (CHHFHGLWYM…WLNLRAAIKS (176 aa)) are Cytoplasmic-facing. The 144-residue stretch at 639 to 782 (ICYDAFVSYS…GFWLNLRAAI (144 aa)) folds into the TIR domain. Residue Lys754 forms a Glycyl lysine isopeptide (Lys-Gly) (interchain with G-Cter in ubiquitin) linkage. The short motif at 761 to 778 (YLEWPTDEAQQEGFWLNL) is the ATG16L1-binding motif element.

It belongs to the Toll-like receptor family. Interacts with LY96, TLR1 and TLR6 (via extracellular domain). TLR2 seems to exist in heterodimers with either TLR1 or TLR6 before stimulation by the ligand. The heterodimers form bigger oligomers in response to their corresponding ligands as well as further heterotypic associations with other receptors such as CD14 and/or CD36. Binds MYD88 (via TIR domain). Interacts with TICAM1. Interacts with CNPY3. Interacts with ATG16L1. Interacts with PPP1R11. Interacts with TICAM2. Interacts with TIRAP. In terms of processing, ubiquitinated at Lys-754 by PPP1R11, leading to its degradation. Deubiquitinated by USP2. Post-translationally, glycosylation of Asn-442 is critical for secretion of the N-terminal ectodomain of TLR2.

The protein localises to the membrane. Its subcellular location is the cytoplasmic vesicle. It is found in the phagosome membrane. It localises to the membrane raft. Functionally, cooperates with LY96 to mediate the innate immune response to bacterial lipoproteins and other microbial cell wall components. Cooperates with TLR1 or TLR6 to mediate the innate immune response to bacterial lipoproteins or lipopeptides. Acts via MYD88 and TRAF6, leading to NF-kappa-B activation, cytokine secretion and the inflammatory response. May also promote apoptosis in response to lipoproteins. Forms activation clusters composed of several receptors depending on the ligand, these clusters trigger signaling from the cell surface and subsequently are targeted to the Golgi in a lipid-raft dependent pathway. Forms the cluster TLR2:TLR6:CD14:CD36 in response to diacylated lipopeptides and TLR2:TLR1:CD14 in response to triacylated lipopeptides. This Equus caballus (Horse) protein is Toll-like receptor 2 (TLR2).